Consider the following 429-residue polypeptide: Citrate synthase (429 aa).

Active-site residues include histidine 306 and aspartate 364.

This sequence belongs to the citrate synthase family.

The catalysed reaction is oxaloacetate + acetyl-CoA + H2O = citrate + CoA + H(+). It functions in the pathway carbohydrate metabolism; tricarboxylic acid cycle; isocitrate from oxaloacetate: step 1/2. The sequence is that of Citrate synthase (gltA) from Rhizobium meliloti (strain 1021) (Ensifer meliloti).